Consider the following 252-residue polypeptide: Ribosomal RNA small subunit methyltransferase J (252 aa).

S-adenosyl-L-methionine contacts are provided by residues 101 to 102 (RD), 117 to 118 (ER), 153 to 154 (SS), and aspartate 171.

Belongs to the methyltransferase superfamily. RsmJ family.

The protein resides in the cytoplasm. The catalysed reaction is guanosine(1516) in 16S rRNA + S-adenosyl-L-methionine = N(2)-methylguanosine(1516) in 16S rRNA + S-adenosyl-L-homocysteine + H(+). In terms of biological role, specifically methylates the guanosine in position 1516 of 16S rRNA. This is Ribosomal RNA small subunit methyltransferase J from Citrobacter koseri (strain ATCC BAA-895 / CDC 4225-83 / SGSC4696).